Reading from the N-terminus, the 456-residue chain is 3-isopropylmalate dehydratase large subunit (456 aa).

3 residues coordinate [4Fe-4S] cluster: cysteine 336, cysteine 396, and cysteine 399.

Belongs to the aconitase/IPM isomerase family. LeuC type 1 subfamily. As to quaternary structure, heterodimer of LeuC and LeuD. The cofactor is [4Fe-4S] cluster.

The catalysed reaction is (2R,3S)-3-isopropylmalate = (2S)-2-isopropylmalate. It functions in the pathway amino-acid biosynthesis; L-leucine biosynthesis; L-leucine from 3-methyl-2-oxobutanoate: step 2/4. Its function is as follows. Catalyzes the isomerization between 2-isopropylmalate and 3-isopropylmalate, via the formation of 2-isopropylmaleate. In Staphylococcus epidermidis (strain ATCC 35984 / DSM 28319 / BCRC 17069 / CCUG 31568 / BM 3577 / RP62A), this protein is 3-isopropylmalate dehydratase large subunit.